A 136-amino-acid polypeptide reads, in one-letter code: Large ribosomal subunit protein uL16 (136 aa).

Belongs to the universal ribosomal protein uL16 family. Part of the 50S ribosomal subunit.

Functionally, binds 23S rRNA and is also seen to make contacts with the A and possibly P site tRNAs. This Erwinia tasmaniensis (strain DSM 17950 / CFBP 7177 / CIP 109463 / NCPPB 4357 / Et1/99) protein is Large ribosomal subunit protein uL16.